The primary structure comprises 457 residues: 3-isopropylmalate dehydratase large subunit (457 aa).

[4Fe-4S] cluster-binding residues include Cys337, Cys397, and Cys400.

It belongs to the aconitase/IPM isomerase family. LeuC type 1 subfamily. In terms of assembly, heterodimer of LeuC and LeuD. It depends on [4Fe-4S] cluster as a cofactor.

The catalysed reaction is (2R,3S)-3-isopropylmalate = (2S)-2-isopropylmalate. The protein operates within amino-acid biosynthesis; L-leucine biosynthesis; L-leucine from 3-methyl-2-oxobutanoate: step 2/4. Functionally, catalyzes the isomerization between 2-isopropylmalate and 3-isopropylmalate, via the formation of 2-isopropylmaleate. The polypeptide is 3-isopropylmalate dehydratase large subunit (Oenococcus oeni (strain ATCC BAA-331 / PSU-1)).